The following is a 973-amino-acid chain: UvrABC system protein A (973 aa).

Residue 34-41 (GLSGSGKS) coordinates ATP. 2 consecutive ABC transporter domains span residues 331 to 609 (WAKS…PKSL) and 629 to 958 (PKKK…QFLK). 662–669 (GVSGGGKS) contacts ATP. Residues 761-787 (CEACQGDGVIKIEMHFLPDVYVTCDVC) form a C4-type zinc finger.

Belongs to the ABC transporter superfamily. UvrA family. In terms of assembly, forms a heterotetramer with UvrB during the search for lesions.

It localises to the cytoplasm. Functionally, the UvrABC repair system catalyzes the recognition and processing of DNA lesions. UvrA is an ATPase and a DNA-binding protein. A damage recognition complex composed of 2 UvrA and 2 UvrB subunits scans DNA for abnormalities. When the presence of a lesion has been verified by UvrB, the UvrA molecules dissociate. This Rhizobium meliloti (strain 1021) (Ensifer meliloti) protein is UvrABC system protein A.